Consider the following 132-residue polypeptide: MSMTDNVADMLTRIRNAYKSKLINVSFPSSKIKTSILEVLQKEGYIKNYTSTPKDNISYTEVTLKYSANGDASICEIHRVSKPGKRVYSAIKDLKGYYNNMGIYILSTPYGVMSDREAHIKNVGGEVICKVF.

The protein belongs to the universal ribosomal protein uS8 family. As to quaternary structure, part of the 30S ribosomal subunit. Contacts proteins S5 and S12.

Its function is as follows. One of the primary rRNA binding proteins, it binds directly to 16S rRNA central domain where it helps coordinate assembly of the platform of the 30S subunit. In Rickettsia bellii (strain OSU 85-389), this protein is Small ribosomal subunit protein uS8.